A 256-amino-acid polypeptide reads, in one-letter code: 2-C-methyl-D-erythritol 4-phosphate cytidylyltransferase (256 aa).

The protein belongs to the IspD/TarI cytidylyltransferase family. IspD subfamily.

The enzyme catalyses 2-C-methyl-D-erythritol 4-phosphate + CTP + H(+) = 4-CDP-2-C-methyl-D-erythritol + diphosphate. It participates in isoprenoid biosynthesis; isopentenyl diphosphate biosynthesis via DXP pathway; isopentenyl diphosphate from 1-deoxy-D-xylulose 5-phosphate: step 2/6. Functionally, catalyzes the formation of 4-diphosphocytidyl-2-C-methyl-D-erythritol from CTP and 2-C-methyl-D-erythritol 4-phosphate (MEP). The protein is 2-C-methyl-D-erythritol 4-phosphate cytidylyltransferase of Corynebacterium glutamicum (strain R).